A 272-amino-acid polypeptide reads, in one-letter code: Cytochrome b-c1 complex subunit Rieske-1, mitochondrial (272 aa).

The transit peptide at 1–60 (MLRVAGRRLFSVSQRSSTATSFVVSRDHTLSDGGGDSSSAPRSLPSADLSSYHRSLIRGF) directs the protein to the mitochondrion. The tract at residues 27 to 46 (DHTLSDGGGDSSSAPRSLPS) is disordered. Residues 61 to 109 (SSQVLAQGNEIGFGSEVPATVEAVKTPNSKIVYDDHNHERYPPGDPSKR) lie on the Mitochondrial matrix side of the membrane. Residues 110-132 (AFAYFVLSGGRFVYASVLRLLVL) form a helical membrane-spanning segment. Topologically, residues 133-272 (KLIVSMSASK…FLEENKLLIG (140 aa)) are mitochondrial intermembrane. In terms of domain architecture, Rieske spans 201-270 (VRVKNPEWLV…YSFLEENKLL (70 aa)). Residues Cys215, His217, Cys234, and His237 each contribute to the [2Fe-2S] cluster site. Residues Cys220 and Cys236 are joined by a disulfide bond.

It belongs to the Rieske iron-sulfur protein family. As to quaternary structure, component of the ubiquinol-cytochrome c oxidoreductase (cytochrome b-c1 complex, complex III, CIII), a multisubunit enzyme composed of 10 subunits. The complex is composed of 3 respiratory subunits cytochrome b (MT-CYB), cytochrome c1 (CYC1-1 or CYC1-2) and Rieske protein (UCR1-1 or UCR1-2), 2 core protein subunits MPPalpha1 (or MPPalpha2) and MPPB, and 5 low-molecular weight protein subunits QCR7-1 (or QCR7-2), UCRQ-1 (or UCRQ-2), QCR9, UCRY and probably QCR6-1 (or QCR6-2). The complex exists as an obligatory dimer and forms supercomplexes (SCs) in the inner mitochondrial membrane with NADH-ubiquinone oxidoreductase (complex I, CI), resulting in different assemblies (supercomplexes SCI(1)III(2) and SCI(2)III(4)). Requires [2Fe-2S] cluster as cofactor.

It is found in the mitochondrion inner membrane. It carries out the reaction a quinol + 2 Fe(III)-[cytochrome c](out) = a quinone + 2 Fe(II)-[cytochrome c](out) + 2 H(+)(out). In terms of biological role, component of the ubiquinol-cytochrome c oxidoreductase, a multisubunit transmembrane complex that is part of the mitochondrial electron transport chain which drives oxidative phosphorylation. The respiratory chain contains 3 multisubunit complexes succinate dehydrogenase (complex II, CII), ubiquinol-cytochrome c oxidoreductase (cytochrome b-c1 complex, complex III, CIII) and cytochrome c oxidase (complex IV, CIV), that cooperate to transfer electrons derived from NADH and succinate to molecular oxygen, creating an electrochemical gradient over the inner membrane that drives transmembrane transport and the ATP synthase. The cytochrome b-c1 complex catalyzes electron transfer from ubiquinol to cytochrome c, linking this redox reaction to translocation of protons across the mitochondrial inner membrane, with protons being carried across the membrane as hydrogens on the quinol. In the process called Q cycle, 2 protons are consumed from the matrix, 4 protons are released into the intermembrane space and 2 electrons are passed to cytochrome c. The Rieske protein is a catalytic core subunit containing a [2Fe-2S] iron-sulfur cluster. It cycles between 2 conformational states during catalysis to transfer electrons from the quinol bound in the Q(0) site in cytochrome b to cytochrome c1. In Arabidopsis thaliana (Mouse-ear cress), this protein is Cytochrome b-c1 complex subunit Rieske-1, mitochondrial.